Here is a 312-residue protein sequence, read N- to C-terminus: MILEIPHIPVLLNEVQEIFKNLKTGYFLDCTLGFGGHSEALLKNHPDLKFIACDQDQQALKFSKKRLKDFRNRITFMQSNFSEVLEKISHKEELRGILADIGVSSFQLDNNERGFSVNSDFLDMRMNQNSKISAYEIINTYTKEQLTSIFKDYGELHDAHFIAEKICLERSKNLIKSAKELYQIIGKGKQNHRKISKATLAFQAIRIEVNQELKVLKDFLEHLENLKPKNCILAIISFHSLEDRIVKQFFKKWSKNCICNEKIMRCECGNNHSLGQIITKKAISASKEELLKNSRSSCAKMRAFYFNNLDNK.

S-adenosyl-L-methionine is bound by residues 35-37 (GGH), Asp54, Phe81, Asp100, and Gln107.

The protein belongs to the methyltransferase superfamily. RsmH family.

The protein resides in the cytoplasm. The catalysed reaction is cytidine(1402) in 16S rRNA + S-adenosyl-L-methionine = N(4)-methylcytidine(1402) in 16S rRNA + S-adenosyl-L-homocysteine + H(+). In terms of biological role, specifically methylates the N4 position of cytidine in position 1402 (C1402) of 16S rRNA. The polypeptide is Ribosomal RNA small subunit methyltransferase H (Campylobacter jejuni subsp. jejuni serotype O:2 (strain ATCC 700819 / NCTC 11168)).